The primary structure comprises 284 residues: 2-dehydro-3-deoxyphosphooctonate aldolase (284 aa).

The protein belongs to the KdsA family.

The protein resides in the cytoplasm. The enzyme catalyses D-arabinose 5-phosphate + phosphoenolpyruvate + H2O = 3-deoxy-alpha-D-manno-2-octulosonate-8-phosphate + phosphate. It participates in carbohydrate biosynthesis; 3-deoxy-D-manno-octulosonate biosynthesis; 3-deoxy-D-manno-octulosonate from D-ribulose 5-phosphate: step 2/3. Its pathway is bacterial outer membrane biogenesis; lipopolysaccharide biosynthesis. In Burkholderia mallei (strain NCTC 10247), this protein is 2-dehydro-3-deoxyphosphooctonate aldolase.